A 418-amino-acid polypeptide reads, in one-letter code: tRNA-2-methylthio-N(6)-dimethylallyladenosine synthase (418 aa).

Positions 2 to 118 (PGYYLWTIGC…WREIPEGFIL (117 aa)) constitute an MTTase N-terminal domain. [4Fe-4S] cluster-binding residues include cysteine 11, cysteine 47, cysteine 81, cysteine 134, cysteine 138, and cysteine 141. The region spanning 120 to 351 (LRPPVSANVT…EDLQKETVGK (232 aa)) is the Radical SAM core domain. The TRAM domain maps to 346–414 (KETVGKANAA…PWSLQAKLVN (69 aa)).

Belongs to the methylthiotransferase family. MiaB subfamily. As to quaternary structure, monomer. The cofactor is [4Fe-4S] cluster.

The protein localises to the cytoplasm. The catalysed reaction is N(6)-dimethylallyladenosine(37) in tRNA + (sulfur carrier)-SH + AH2 + 2 S-adenosyl-L-methionine = 2-methylsulfanyl-N(6)-dimethylallyladenosine(37) in tRNA + (sulfur carrier)-H + 5'-deoxyadenosine + L-methionine + A + S-adenosyl-L-homocysteine + 2 H(+). Functionally, catalyzes the methylthiolation of N6-(dimethylallyl)adenosine (i(6)A), leading to the formation of 2-methylthio-N6-(dimethylallyl)adenosine (ms(2)i(6)A) at position 37 in tRNAs that read codons beginning with uridine. The protein is tRNA-2-methylthio-N(6)-dimethylallyladenosine synthase of Dehalococcoides mccartyi (strain CBDB1).